Reading from the N-terminus, the 577-residue chain is ER degradation-enhancing alpha-mannosidase-like protein 2 (577 aa).

Positions 1–21 are cleaved as a signal peptide; sequence MPFRLLIPLGLVCVLLPLHHG. 4 N-linked (GlcNAc...) asparagine glycosylation sites follow: Asn90, Asn112, Asn289, and Asn450. The interval 513–561 is disordered; the sequence is PKRAQRKTVRSGPWEPQSGPATLSSPANQPREKQPAQQRTPLLSCPSQP. Polar residues-rich tracts occupy residues 531-540 and 547-561; these read GPATLSSPAN and PAQQ…PSQP.

This sequence belongs to the glycosyl hydrolase 47 family. In terms of processing, N-glycosylated.

It localises to the endoplasmic reticulum lumen. Involved in the endoplasmic reticulum-associated degradation (ERAD) pathway that targets misfolded glycoproteins for degradation in an N-glycan-dependent manner. May initiate ERAD by promoting the first mannose trimming step of ERAD substrates, from Man9GlcNAc2 to Man8GlcNAc2. Seems to recognize and bind to exposed hydrophobic regions in target proteins. This is ER degradation-enhancing alpha-mannosidase-like protein 2 from Mus musculus (Mouse).